Reading from the N-terminus, the 282-residue chain is Bifunctional protein FolD (282 aa).

NADP(+)-binding positions include 164–166 and Ser189; that span reads GRS.

The protein belongs to the tetrahydrofolate dehydrogenase/cyclohydrolase family. Homodimer.

The catalysed reaction is (6R)-5,10-methylene-5,6,7,8-tetrahydrofolate + NADP(+) = (6R)-5,10-methenyltetrahydrofolate + NADPH. The enzyme catalyses (6R)-5,10-methenyltetrahydrofolate + H2O = (6R)-10-formyltetrahydrofolate + H(+). It participates in one-carbon metabolism; tetrahydrofolate interconversion. Its function is as follows. Catalyzes the oxidation of 5,10-methylenetetrahydrofolate to 5,10-methenyltetrahydrofolate and then the hydrolysis of 5,10-methenyltetrahydrofolate to 10-formyltetrahydrofolate. This is Bifunctional protein FolD from Streptococcus suis (strain 05ZYH33).